Here is a 273-residue protein sequence, read N- to C-terminus: Probable cysteine-rich repeat secretory protein 6 (273 aa).

Positions 1–21 (MTRIIDVSLFCFFLFSLGAMS) are cleaved as a signal peptide. 2 Gnk2-homologous domains span residues 22–122 (QPSQ…DNSF) and 128–241 (DSPA…ISAL).

This sequence belongs to the cysteine-rich repeat secretory protein family.

Its subcellular location is the secreted. This chain is Probable cysteine-rich repeat secretory protein 6 (CRRSP6), found in Arabidopsis thaliana (Mouse-ear cress).